We begin with the raw amino-acid sequence, 277 residues long: Knob-associated histidine-rich protein (277 aa).

Disordered stretches follow at residues 95 to 114 and 162 to 277; these read DGSHGNLRGHDNKGSEGYGY and SSVN…KKKK. Composition is skewed to basic and acidic residues over residues 169 to 190 and 211 to 220; these read KHGDEKHHSSKKHEGNDGEGEK and KDNEDAESVK. Residues 221-237 show a composition bias toward basic residues; it reads SKKHKSHDCEKKKSKKH. 2 stretches are compositionally biased toward basic and acidic residues: residues 238-259 and 268-277; these read KDNEDAESVKSKKSVKEKGEKH and KTNEEKKKKK.

The protein resides in the secreted. KAHRP might mimick human histidine-rich glycoproteins to anchor host thrombospondin or a parasite analog in a binding complex with the endothelial cell receptor. The protein is Knob-associated histidine-rich protein of Plasmodium falciparum (isolate CDC / Honduras).